The sequence spans 219 residues: Ribosome hibernation promotion factor (219 aa).

It belongs to the HPF/YfiA ribosome-associated protein family. Long HPF subfamily. As to quaternary structure, interacts with 100S ribosomes.

The protein resides in the cytoplasm. Required for dimerization of active 70S ribosomes into 100S ribosomes in stationary phase; 100S ribosomes are translationally inactive and sometimes present during exponential growth. In Mycobacterium tuberculosis (strain ATCC 25618 / H37Rv), this protein is Ribosome hibernation promotion factor.